Here is a 72-residue protein sequence, read N- to C-terminus: Crustacean hyperglycemic hormone (72 aa).

Gln1 bears the Pyrrolidone carboxylic acid; partial mark. 3 cysteine pairs are disulfide-bonded: Cys7-Cys43, Cys23-Cys39, and Cys26-Cys52. Residue Val72 is modified to Valine amide.

The protein belongs to the arthropod CHH/MIH/GIH/VIH hormone family. Post-translationally, the N-terminus forms pyrrolidone carboxylic acid in isoform CHH-II and is free in isoform CHH-I. In terms of tissue distribution, produced by the medulla terminalis X-organ in the eyestalks and transported to the sinus gland where they are stored and released.

The protein resides in the secreted. In terms of biological role, hormone found in the sinus gland of isopods and decapods which controls the blood sugar level. Has a secretagogue action over the amylase released from the midgut gland. May act as a stress hormone and may be involved in the control of molting and reproduction. This is Crustacean hyperglycemic hormone from Cancer pagurus (Rock crab).